The sequence spans 500 residues: Lysine--tRNA ligase (500 aa).

2 residues coordinate Mg(2+): Glu-410 and Glu-417.

Belongs to the class-II aminoacyl-tRNA synthetase family. As to quaternary structure, homodimer. The cofactor is Mg(2+).

The protein localises to the cytoplasm. It carries out the reaction tRNA(Lys) + L-lysine + ATP = L-lysyl-tRNA(Lys) + AMP + diphosphate. The protein is Lysine--tRNA ligase of Shewanella oneidensis (strain ATCC 700550 / JCM 31522 / CIP 106686 / LMG 19005 / NCIMB 14063 / MR-1).